The primary structure comprises 287 residues: Inactive phospholipid phosphatase 7 (287 aa).

The disordered stretch occupies residues 1-75 (MPANQTRSRA…NNKDKKELPE (75 aa)). Over 1–120 (MPANQTRSRA…SSSWGSVRSM (120 aa)) the chain is Cytoplasmic. The span at 31–40 (SGGGGGGGES) shows a compositional bias: gly residues. The span at 49–65 (QRQQQNQQQQGDNPQPE) shows a compositional bias: low complexity. A helical membrane pass occupies residues 121 to 141 (VKLLALTGHGIPWVFGTIVCL). The Extracellular segment spans residues 142 to 146 (MRSNT). A helical membrane pass occupies residues 147-167 (LAGQEVLVNLLLALLLDVMTV). Over 168 to 215 (SGMQKLVKRKGPWEMPPGFFDYLAMDIYSFPAAHASRAVMVSKFLLAH) the chain is Cytoplasmic. A helical transmembrane segment spans residues 216–236 (LVLAVPLRILLVLWAILVGIS). Residues 237–247 (RVLLGRHHLTD) are Extracellular-facing. A helical transmembrane segment spans residues 248-268 (VGCGFALGFLHYSLVEMVWLS). Topologically, residues 269–287 (SNTCQTLISIGTFNWSPLY) are cytoplasmic.

This sequence belongs to the PA-phosphatase related phosphoesterase family.

The protein localises to the nucleus envelope. It localises to the endoplasmic reticulum membrane. It is found in the membrane. In terms of biological role, plays a role as negative regulator of myoblast differentiation, in part through effects on MTOR signaling. Has no detectable enzymatic activity. This chain is Inactive phospholipid phosphatase 7, found in Danio rerio (Zebrafish).